The chain runs to 313 residues: Ribosomal RNA small subunit methyltransferase H (313 aa).

S-adenosyl-L-methionine-binding positions include 35–37, aspartate 55, phenylalanine 81, aspartate 103, and glutamine 110; that span reads GGH.

It belongs to the methyltransferase superfamily. RsmH family.

It is found in the cytoplasm. It catalyses the reaction cytidine(1402) in 16S rRNA + S-adenosyl-L-methionine = N(4)-methylcytidine(1402) in 16S rRNA + S-adenosyl-L-homocysteine + H(+). Functionally, specifically methylates the N4 position of cytidine in position 1402 (C1402) of 16S rRNA. The chain is Ribosomal RNA small subunit methyltransferase H from Azotobacter vinelandii (strain DJ / ATCC BAA-1303).